Consider the following 579-residue polypeptide: MFS-type transporter ppz2 (579 aa).

Residues 1–23 (MQTATALEDSANAPSPAASSQGQ) are disordered. Residues 10-20 (SANAPSPAASS) are compositionally biased toward low complexity. Residue Asn-38 is glycosylated (N-linked (GlcNAc...) asparagine). 14 helical membrane-spanning segments follow: residues 48–68 (ALIM…NTII), 83–103 (AAYT…TMVW), 121–141 (LCFF…MLIA), 145–165 (IQGI…GDLF), 171–191 (GLYY…GPVV), 203–223 (WCFY…ILLL), 236–256 (IAAI…MILL), 269–289 (SATV…CFSW), 298–318 (LLPV…ACFI), 336–356 (AVLG…AVSI), 374–394 (LTPI…FIDL), 403–423 (IIVF…APMV), 438–460 (TSAY…QTVF), and 516–536 (SMWI…PFLG).

This sequence belongs to the major facilitator superfamily. TCR/Tet family.

The protein localises to the membrane. In terms of biological role, MFS-type transporter; part of the gene cluster that mediates the biosynthesis of pyrrolopyrazines, secondary metabolites showing insecticidal activity. Probably involved in the secretion of peramine and other pyrrolopyrazines. This is MFS-type transporter ppz2 from Metarhizium majus (strain ARSEF 297).